The primary structure comprises 202 residues: Ion-translocating oxidoreductase complex subunit G (202 aa).

The helical transmembrane segment at 11-31 (AILLALIALICTALSTGIYLL) threads the bilayer. T177 carries the FMN phosphoryl threonine modification.

This sequence belongs to the RnfG family. In terms of assembly, the complex is composed of six subunits: RnfA, RnfB, RnfC, RnfD, RnfE and RnfG. FMN is required as a cofactor.

It is found in the cell inner membrane. Functionally, part of a membrane-bound complex that couples electron transfer with translocation of ions across the membrane. The polypeptide is Ion-translocating oxidoreductase complex subunit G (Pasteurella multocida (strain Pm70)).